A 461-amino-acid polypeptide reads, in one-letter code: Bifunctional protein GlmU (461 aa).

The segment at 1–229 is pyrophosphorylase; that stretch reads MEKYVVVLAA…FSESLGVNDR (229 aa). UDP-N-acetyl-alpha-D-glucosamine is bound by residues 8–11, Lys-22, Gln-72, and 77–78; these read LAAG and GT. Residue Asp-102 participates in Mg(2+) binding. UDP-N-acetyl-alpha-D-glucosamine contacts are provided by Gly-139, Glu-154, Asn-169, and Asn-227. A Mg(2+)-binding site is contributed by Asn-227. Residues 230–250 are linker; it reads IALAEATRIMQRRINEGHMRD. The tract at residues 251-461 is N-acetyltransferase; sequence GVTFIDPATA…LPLSEDEEWK (211 aa). UDP-N-acetyl-alpha-D-glucosamine-binding residues include Arg-332 and Lys-350. His-362 functions as the Proton acceptor in the catalytic mechanism. UDP-N-acetyl-alpha-D-glucosamine contacts are provided by Tyr-365 and Asn-376. Residues Ala-422 and Arg-439 each coordinate acetyl-CoA.

In the N-terminal section; belongs to the N-acetylglucosamine-1-phosphate uridyltransferase family. It in the C-terminal section; belongs to the transferase hexapeptide repeat family. As to quaternary structure, homotrimer. Requires Mg(2+) as cofactor.

The protein resides in the cytoplasm. It catalyses the reaction alpha-D-glucosamine 1-phosphate + acetyl-CoA = N-acetyl-alpha-D-glucosamine 1-phosphate + CoA + H(+). The enzyme catalyses N-acetyl-alpha-D-glucosamine 1-phosphate + UTP + H(+) = UDP-N-acetyl-alpha-D-glucosamine + diphosphate. It participates in nucleotide-sugar biosynthesis; UDP-N-acetyl-alpha-D-glucosamine biosynthesis; N-acetyl-alpha-D-glucosamine 1-phosphate from alpha-D-glucosamine 6-phosphate (route II): step 2/2. It functions in the pathway nucleotide-sugar biosynthesis; UDP-N-acetyl-alpha-D-glucosamine biosynthesis; UDP-N-acetyl-alpha-D-glucosamine from N-acetyl-alpha-D-glucosamine 1-phosphate: step 1/1. The protein operates within bacterial outer membrane biogenesis; LPS lipid A biosynthesis. Catalyzes the last two sequential reactions in the de novo biosynthetic pathway for UDP-N-acetylglucosamine (UDP-GlcNAc). The C-terminal domain catalyzes the transfer of acetyl group from acetyl coenzyme A to glucosamine-1-phosphate (GlcN-1-P) to produce N-acetylglucosamine-1-phosphate (GlcNAc-1-P), which is converted into UDP-GlcNAc by the transfer of uridine 5-monophosphate (from uridine 5-triphosphate), a reaction catalyzed by the N-terminal domain. This Lactobacillus delbrueckii subsp. bulgaricus (strain ATCC 11842 / DSM 20081 / BCRC 10696 / JCM 1002 / NBRC 13953 / NCIMB 11778 / NCTC 12712 / WDCM 00102 / Lb 14) protein is Bifunctional protein GlmU.